A 276-amino-acid polypeptide reads, in one-letter code: Sulfur carrier protein FdhD (276 aa).

The active-site Cysteine persulfide intermediate is Cys-118.

The protein belongs to the FdhD family.

The protein localises to the cytoplasm. In terms of biological role, required for formate dehydrogenase (FDH) activity. Acts as a sulfur carrier protein that transfers sulfur from IscS to the molybdenum cofactor prior to its insertion into FDH. This is Sulfur carrier protein FdhD from Mycobacterium bovis (strain ATCC BAA-935 / AF2122/97).